A 357-amino-acid chain; its full sequence is Heat-inducible transcription repressor HrcA (357 aa).

Belongs to the HrcA family.

Negative regulator of class I heat shock genes (grpE-dnaK-dnaJ and groELS operons). Prevents heat-shock induction of these operons. The sequence is that of Heat-inducible transcription repressor HrcA from Chlorobium limicola (strain DSM 245 / NBRC 103803 / 6330).